The chain runs to 212 residues: V-type ATP synthase subunit E (212 aa).

This sequence belongs to the V-ATPase E subunit family.

Produces ATP from ADP in the presence of a proton gradient across the membrane. This Nitrosococcus oceani (strain ATCC 19707 / BCRC 17464 / JCM 30415 / NCIMB 11848 / C-107) protein is V-type ATP synthase subunit E.